We begin with the raw amino-acid sequence, 702 residues long: Ribosomal RNA large subunit methyltransferase K/L (702 aa).

The 112-residue stretch at 43 to 154 folds into the THUMP domain; sequence LIYQSLMWSR…KETASIALDL (112 aa).

This sequence belongs to the methyltransferase superfamily. RlmKL family.

Its subcellular location is the cytoplasm. It carries out the reaction guanosine(2445) in 23S rRNA + S-adenosyl-L-methionine = N(2)-methylguanosine(2445) in 23S rRNA + S-adenosyl-L-homocysteine + H(+). The catalysed reaction is guanosine(2069) in 23S rRNA + S-adenosyl-L-methionine = N(2)-methylguanosine(2069) in 23S rRNA + S-adenosyl-L-homocysteine + H(+). Specifically methylates the guanine in position 2445 (m2G2445) and the guanine in position 2069 (m7G2069) of 23S rRNA. The polypeptide is Ribosomal RNA large subunit methyltransferase K/L (Salmonella paratyphi B (strain ATCC BAA-1250 / SPB7)).